Consider the following 201-residue polypeptide: Holliday junction branch migration complex subunit RuvA (201 aa).

Residues 1–63 are domain I; that stretch reads MYDYIKGTVT…EDNISLFGFQ (63 aa). The segment at 64–142 is domain II; the sequence is TTEERYLFKK…DVVASEIVYV (79 aa). Residues 143–153 form a flexible linker region; that stretch reads APENDMVAGLS. Residues 153-201 are domain III; it reads SPQLEEAVLALEALGYSTRELKKVIPKLAKEEDLTSDAYIKLALQLMTK.

This sequence belongs to the RuvA family. As to quaternary structure, homotetramer. Forms an RuvA(8)-RuvB(12)-Holliday junction (HJ) complex. HJ DNA is sandwiched between 2 RuvA tetramers; dsDNA enters through RuvA and exits via RuvB. An RuvB hexamer assembles on each DNA strand where it exits the tetramer. Each RuvB hexamer is contacted by two RuvA subunits (via domain III) on 2 adjacent RuvB subunits; this complex drives branch migration. In the full resolvosome a probable DNA-RuvA(4)-RuvB(12)-RuvC(2) complex forms which resolves the HJ.

The protein resides in the cytoplasm. The RuvA-RuvB-RuvC complex processes Holliday junction (HJ) DNA during genetic recombination and DNA repair, while the RuvA-RuvB complex plays an important role in the rescue of blocked DNA replication forks via replication fork reversal (RFR). RuvA specifically binds to HJ cruciform DNA, conferring on it an open structure. The RuvB hexamer acts as an ATP-dependent pump, pulling dsDNA into and through the RuvAB complex. HJ branch migration allows RuvC to scan DNA until it finds its consensus sequence, where it cleaves and resolves the cruciform DNA. The protein is Holliday junction branch migration complex subunit RuvA of Listeria monocytogenes serotype 4a (strain HCC23).